A 447-amino-acid chain; its full sequence is Probable glycine dehydrogenase (decarboxylating) subunit 1 (447 aa).

This sequence belongs to the GcvP family. N-terminal subunit subfamily. As to quaternary structure, the glycine cleavage system is composed of four proteins: P, T, L and H. In this organism, the P 'protein' is a heterodimer of two subunits.

The enzyme catalyses N(6)-[(R)-lipoyl]-L-lysyl-[glycine-cleavage complex H protein] + glycine + H(+) = N(6)-[(R)-S(8)-aminomethyldihydrolipoyl]-L-lysyl-[glycine-cleavage complex H protein] + CO2. In terms of biological role, the glycine cleavage system catalyzes the degradation of glycine. The P protein binds the alpha-amino group of glycine through its pyridoxal phosphate cofactor; CO(2) is released and the remaining methylamine moiety is then transferred to the lipoamide cofactor of the H protein. In Metallosphaera sedula (strain ATCC 51363 / DSM 5348 / JCM 9185 / NBRC 15509 / TH2), this protein is Probable glycine dehydrogenase (decarboxylating) subunit 1.